The sequence spans 178 residues: Large ribosomal subunit protein uL6 (178 aa).

Belongs to the universal ribosomal protein uL6 family. In terms of assembly, part of the 50S ribosomal subunit.

In terms of biological role, this protein binds to the 23S rRNA, and is important in its secondary structure. It is located near the subunit interface in the base of the L7/L12 stalk, and near the tRNA binding site of the peptidyltransferase center. This Buchnera aphidicola subsp. Acyrthosiphon pisum (strain APS) (Acyrthosiphon pisum symbiotic bacterium) protein is Large ribosomal subunit protein uL6.